The following is an 877-amino-acid chain: Alanine--tRNA ligase (877 aa).

Residues histidine 567, histidine 571, cysteine 669, and histidine 673 each coordinate Zn(2+).

Belongs to the class-II aminoacyl-tRNA synthetase family. The cofactor is Zn(2+).

It localises to the cytoplasm. The enzyme catalyses tRNA(Ala) + L-alanine + ATP = L-alanyl-tRNA(Ala) + AMP + diphosphate. Functionally, catalyzes the attachment of alanine to tRNA(Ala) in a two-step reaction: alanine is first activated by ATP to form Ala-AMP and then transferred to the acceptor end of tRNA(Ala). Also edits incorrectly charged Ser-tRNA(Ala) and Gly-tRNA(Ala) via its editing domain. The sequence is that of Alanine--tRNA ligase from Rickettsia prowazekii (strain Madrid E).